The chain runs to 193 residues: Apoptosis-associated speck-like protein containing a CARD (193 aa).

Residues 1 to 91 (MGRARDAILD…AEQLQTTKEE (91 aa)) enclose the Pyrin domain. Residues Lys55 and Lys172 each participate in a glycyl lysine isopeptide (Lys-Gly) (interchain with G-Cter in ubiquitin) cross-link. Positions 105–193 (STARTGHFVD…PYLVMDLEQS (89 aa)) constitute a CARD domain. Ser193 is subject to Phosphoserine.

Self-associates; enforced oligomerization induces apoptosis, NF-kappa-B regulation and interleukin-1 beta secretion. Homooligomers can form disk-like particles of approximately 12 nm diameter and approximately 1 nm height. Component of several inflammasomes containing one pattern recognition receptor/sensor, such as NLRP2, NLRP3, NLRP6, NLRC4, AIM2, MEFV or NOD2, and probably NLRC4 or NLRP12. Major component of the ASC pyroptosome, a 1-2 um supramolecular assembly (one per macrophage cell) which consists of oligomerized PYCARD dimers and CASP1. Interacts with CASP1 (precursor form); the interaction induces activation of CASP1 leading to the processing of interleukin-1 beta; PYCARD competes with RIPK2 for binding to CASP1. Interacts with NLRP3; the interaction requires the homooligomerization of NLRP3. Interacts with NLRP2, NLRC4, MEFV, CARD16, AIM2, NOD2, RIGI, RIPK2, PYDC1, PYDC2, NLRP10, CHUK, IKBKB and BAX. Interacts with CASP8. Component of the AIM2 PANoptosome complex, a multiprotein complex that drives inflammatory cell death (PANoptosis). Phosphorylated. In terms of processing, 'Lys-63'-linked polyubiquitination by TRAF3 is critical for speck formation and inflammasome activation. 'Lys-63'-linked deubiquitinated by USP50; a crucial step for NLRP3-mediated inflammasome activation. 'Lys-63'-linked polyubiquitination by PELI1 is also critical for speck formation and inflammasome activation. Deubiquitinated by USP3 that cleaves 'Lys-48'-linked ubiquitin chains and strengthens its stability by blocking proteasomal degradation. Expressed in small intestine, colon, thymus, spleen, brain, heart, skeletal muscle, kidney, lung and liver.

Its subcellular location is the cytoplasm. It is found in the inflammasome. It localises to the endoplasmic reticulum. The protein resides in the mitochondrion. The protein localises to the nucleus. In terms of biological role, functions as a key mediator in apoptosis and inflammation. Promotes caspase-mediated apoptosis involving predominantly caspase-8 and also caspase-9 in a probable cell type-specific manner. Involved in activation of the mitochondrial apoptotic pathway, promotes caspase-8-dependent proteolytic maturation of BID independently of FADD in certain cell types and also mediates mitochondrial translocation of BAX and activates BAX-dependent apoptosis coupled to activation of caspase-9, -2 and -3. Involved in innate immune response by acting as an integral adapter in the assembly of various inflammasomes (NLRP2, NLRP3, NLRP6 and AIM2) which recruit and activate caspase-1 leading to processing and secretion of pro-inflammatory cytokines. Caspase-1-dependent inflammation leads to macrophage pyroptosis, a form of cell death. The function as activating adapter in different types of inflammasomes is mediated by the pyrin and CARD domains and their homotypic interactions. Clustered PYCARD nucleates the formation of caspase-1 filaments through the interaction of their respective CARD domains, acting as a platform for of caspase-1 polymerization. In the NLRC4 inflammasomes seems not be required but facilitates the processing of procaspase-1. In cooperation with NOD2 involved in an inflammasome activated by bacterial muramyl dipeptide leading to caspase-1 activation. May be involved in RIGI-triggered pro-inflammatory responses and inflammasome activation. In collaboration with AIM2 which detects cytosolic double-stranded DNA may also be involved in a caspase-1-independent cell death that involves caspase-8. In adaptive immunity may be involved in maturation of dendritic cells to stimulate T-cell immunity and in cytoskeletal rearrangements coupled to chemotaxis and antigen uptake may be involved in post-transcriptional regulation of the guanine nucleotide exchange factor DOCK2; the latter function is proposed to involve the nuclear form. Also involved in transcriptional activation of cytokines and chemokines independent of the inflammasome; this function may involve AP-1, NF-kappa-B, MAPK and caspase-8 signaling pathways. For regulation of NF-kappa-B activating and inhibiting functions have been reported. Modulates NF-kappa-B induction at the level of the IKK complex by inhibiting kinase activity of CHUK and IKBK. Proposed to compete with RIPK2 for association with CASP1 thereby down-regulating CASP1-mediated RIPK2-dependent NF-kappa-B activation and activating interleukin-1 beta processing. Modulates host resistance to DNA virus infection, probably by inducing the cleavage of and inactivating CGAS in presence of cytoplasmic double-stranded DNA. The polypeptide is Apoptosis-associated speck-like protein containing a CARD (Pycard) (Mus musculus (Mouse)).